The following is a 73-amino-acid chain: Small ribosomal subunit protein bS18c (73 aa).

The protein belongs to the bacterial ribosomal protein bS18 family. Part of the 30S ribosomal subunit.

Its subcellular location is the plastid. The protein localises to the chloroplast. The sequence is that of Small ribosomal subunit protein bS18c from Nephroselmis olivacea (Green alga).